Reading from the N-terminus, the 405-residue chain is Polyadenylate-binding protein RBP45B (405 aa).

The segment covering 1–19 has biased composition (pro residues); sequence MMQQPPPGGILPHHAPPPS. The tract at residues 1–54 is disordered; that stretch reads MMQQPPPGGILPHHAPPPSAQQQYGYQQPYGIAGAAPPPPQMWNPQAAAPPSVQ. Positions 20-35 are enriched in low complexity; that stretch reads AQQQYGYQQPYGIAGA. RRM domains lie at 62-143, 155-234, and 261-333; these read RTLW…WASL, YTIF…PAAS, and TTVF…WGRS. The interval 379–405 is disordered; it reads GGYQQTPQAGQQPPQQPPQQQQVGFSY. Residues 380 to 405 show a composition bias toward low complexity; the sequence is GYQQTPQAGQQPPQQPPQQQQVGFSY.

The protein belongs to the polyadenylate-binding RBP45 family. Both isoform 1 and isoform 2 interact with poly(A)+ RNA in nucleus. As to expression, expressed in roots, leaves, stems, flowers, siliques, and seedlings. Present in immature anther tissues (tapetum cells) and mature pollen grains.

It localises to the nucleus. In terms of biological role, heterogeneous nuclear ribonucleoprotein (hnRNP)-protein binding the poly(A) tail of mRNA and probably involved in some steps of pre-mRNA maturation. This Arabidopsis thaliana (Mouse-ear cress) protein is Polyadenylate-binding protein RBP45B (RBP45B).